The chain runs to 319 residues: Lipoyl synthase (319 aa).

Polar residues predominate over residues 1–12; that stretch reads MVTIVDTLSNTP. Positions 1 to 32 are disordered; sequence MVTIVDTLSNTPLRPRHPEKANRPDSISPAKP. Residues cysteine 61, cysteine 66, cysteine 72, cysteine 87, cysteine 91, cysteine 94, and serine 300 each coordinate [4Fe-4S] cluster. The Radical SAM core domain occupies 73–289; the sequence is WDKKHATFMI…ETVAYTKGFL (217 aa).

Belongs to the radical SAM superfamily. Lipoyl synthase family. Requires [4Fe-4S] cluster as cofactor.

It is found in the cytoplasm. It catalyses the reaction [[Fe-S] cluster scaffold protein carrying a second [4Fe-4S](2+) cluster] + N(6)-octanoyl-L-lysyl-[protein] + 2 oxidized [2Fe-2S]-[ferredoxin] + 2 S-adenosyl-L-methionine + 4 H(+) = [[Fe-S] cluster scaffold protein] + N(6)-[(R)-dihydrolipoyl]-L-lysyl-[protein] + 4 Fe(3+) + 2 hydrogen sulfide + 2 5'-deoxyadenosine + 2 L-methionine + 2 reduced [2Fe-2S]-[ferredoxin]. Its pathway is protein modification; protein lipoylation via endogenous pathway; protein N(6)-(lipoyl)lysine from octanoyl-[acyl-carrier-protein]: step 2/2. Functionally, catalyzes the radical-mediated insertion of two sulfur atoms into the C-6 and C-8 positions of the octanoyl moiety bound to the lipoyl domains of lipoate-dependent enzymes, thereby converting the octanoylated domains into lipoylated derivatives. The sequence is that of Lipoyl synthase from Bradyrhizobium sp. (strain BTAi1 / ATCC BAA-1182).